The chain runs to 301 residues: Tyrosine recombinase XerD (301 aa).

A Core-binding (CB) domain is found at 6 to 89 (PLHQQLIEQF…ALKVFFHFLK (84 aa)). In terms of domain architecture, Tyr recombinase spans 108–293 (RLPSILSTEE…ASESIIEKFH (186 aa)). Residues arginine 152, lysine 174, histidine 245, arginine 248, and histidine 271 contribute to the active site. Tyrosine 280 functions as the O-(3'-phospho-DNA)-tyrosine intermediate in the catalytic mechanism.

It belongs to the 'phage' integrase family. XerD subfamily. As to quaternary structure, forms a cyclic heterotetrameric complex composed of two molecules of XerC and two molecules of XerD.

The protein resides in the cytoplasm. Functionally, site-specific tyrosine recombinase, which acts by catalyzing the cutting and rejoining of the recombining DNA molecules. The XerC-XerD complex is essential to convert dimers of the bacterial chromosome into monomers to permit their segregation at cell division. It also contributes to the segregational stability of plasmids. The protein is Tyrosine recombinase XerD of Chlamydia muridarum (strain MoPn / Nigg).